Here is a 397-residue protein sequence, read N- to C-terminus: Phosphoglycerate kinase (397 aa).

Substrate is bound by residues Asp-21–Asn-23, Arg-37, His-60–Arg-63, Arg-119, and Arg-152. Residues Lys-203, Gly-294, Glu-325, and Gly-354–Ser-357 contribute to the ATP site.

This sequence belongs to the phosphoglycerate kinase family. As to quaternary structure, monomer.

Its subcellular location is the cytoplasm. It carries out the reaction (2R)-3-phosphoglycerate + ATP = (2R)-3-phospho-glyceroyl phosphate + ADP. Its pathway is carbohydrate degradation; glycolysis; pyruvate from D-glyceraldehyde 3-phosphate: step 2/5. In Pelodictyon phaeoclathratiforme (strain DSM 5477 / BU-1), this protein is Phosphoglycerate kinase.